We begin with the raw amino-acid sequence, 363 residues long: Aminomethyltransferase (363 aa).

It belongs to the GcvT family. As to quaternary structure, the glycine cleavage system is composed of four proteins: P, T, L and H.

The catalysed reaction is N(6)-[(R)-S(8)-aminomethyldihydrolipoyl]-L-lysyl-[protein] + (6S)-5,6,7,8-tetrahydrofolate = N(6)-[(R)-dihydrolipoyl]-L-lysyl-[protein] + (6R)-5,10-methylene-5,6,7,8-tetrahydrofolate + NH4(+). In terms of biological role, the glycine cleavage system catalyzes the degradation of glycine. The polypeptide is Aminomethyltransferase (Staphylococcus aureus (strain MRSA252)).